A 439-amino-acid chain; its full sequence is MTAPVLIESLDQEGRGVAHAEGKVIFIEGALPGEVVTYNAYRRKPSFELAQVGQILKPAFSRVTPECHHFGICGGCSMQHMDVRTQVAAKQRVLEDNLKHIGKVAPELVLPAVYGSPWGYRYRARLSVRYVAKKGGVLVGFHEKRSSFIADMQACRIMPPRISALIMPLRKLVESLSIRERLPQIEVSLGEDVDVLVLRILEPLTAQDETLLKAFADQHHVQLFLQTGGPQTAYPFYPEDAPELSYTLPEFDVTIPFHPTEFTQVNPMVNRILVRRALNLLDPRRGERIADLFCGLGNFTLPVARRGAQVVGYEGSAALVSRARQNSQRNGLAGSTRFMEANLFEIDESWMREQGDFDKMLIDPPREGAVAVVTALEEKQLKPWRIVYVSCNPATLARDASVLVHRNGYALKAAGVINMFPHTAHVESIALFEKARRQA.

One can recognise a TRAM domain in the interval M1 to Q54. C67, C73, C76, and C155 together coordinate [4Fe-4S] cluster. Q264, F293, N298, E314, N342, and D363 together coordinate S-adenosyl-L-methionine. C391 serves as the catalytic Nucleophile.

Belongs to the class I-like SAM-binding methyltransferase superfamily. RNA M5U methyltransferase family. RlmD subfamily.

The catalysed reaction is uridine(1939) in 23S rRNA + S-adenosyl-L-methionine = 5-methyluridine(1939) in 23S rRNA + S-adenosyl-L-homocysteine + H(+). In terms of biological role, catalyzes the formation of 5-methyl-uridine at position 1939 (m5U1939) in 23S rRNA. This is 23S rRNA (uracil(1939)-C(5))-methyltransferase RlmD from Nitrosospira multiformis (strain ATCC 25196 / NCIMB 11849 / C 71).